The chain runs to 598 residues: MNMYRTHLCNALNLSHVGEEVTLSGWIFRKRDHGGILFIDLRDFYGITQLVLNESSDQELFNYARSIGLESVITVKGTVAARSEDTINTSLSTGHVEVAVHTLVTESAADALPIHVPTSTNHPEDLRLKYRFLDLRCDKVKSNMLLRSAVISEMRKAMESRGFIEVQTPILTASSPEGARDYLVPSRVHAGKFYALPQAPQIFKQLLMASGFDKYFQIAPCFRDEDARADRSPGEFYQLDVEMSFVTQEDVFSVMEPVLRDIFTKFAGNRSVSPTFPRITYKDAMLRYGTDKPDLRNPIIIADVSEVFLRSNFKTFQEGVARGMVVRAIPAPKTSEHPRSFFDSKVEYAKKIGARGLGYITFSTDNTVKGPVAKFLSDTELANIQTLAGVGPGDSVFFVSDAADKAAELSGSVRELLGTELNLIEKDTFKFCWIVDFPYFQYENGKLAFSHNPFSMPQGGLDALSSSNPLDIVAYQYDIVCNGIEISSGAIRNHKLDILYKAFSMVGYSPEAVDAEFGALTRAFRFGVPPHGGIAPGVDRIVMLLADVPNIREIIYFPLTQMGEDLLMGAPSEVNQSHLKELSLALNITPKAAGKTSS.

E177 lines the L-aspartate pocket. An aspartate region spans residues 201–204 (QIFK). L-aspartate-binding residues include R223 and H451. ATP is bound at residue 223-225 (RDE). E485 contacts ATP. Residue R492 coordinates L-aspartate. 537-540 (GVDR) is a binding site for ATP.

Belongs to the class-II aminoacyl-tRNA synthetase family. Type 1 subfamily. Homodimer.

It localises to the cytoplasm. It catalyses the reaction tRNA(Asx) + L-aspartate + ATP = L-aspartyl-tRNA(Asx) + AMP + diphosphate. Aspartyl-tRNA synthetase with relaxed tRNA specificity since it is able to aspartylate not only its cognate tRNA(Asp) but also tRNA(Asn). Reaction proceeds in two steps: L-aspartate is first activated by ATP to form Asp-AMP and then transferred to the acceptor end of tRNA(Asp/Asn). The polypeptide is Aspartate--tRNA(Asp/Asn) ligase (Anaplasma phagocytophilum (strain HZ)).